We begin with the raw amino-acid sequence, 499 residues long: Probable malate:quinone oxidoreductase 4 (499 aa).

It belongs to the MQO family. FAD is required as a cofactor.

The enzyme catalyses (S)-malate + a quinone = a quinol + oxaloacetate. It functions in the pathway carbohydrate metabolism; tricarboxylic acid cycle; oxaloacetate from (S)-malate (quinone route): step 1/1. In Staphylococcus epidermidis (strain ATCC 35984 / DSM 28319 / BCRC 17069 / CCUG 31568 / BM 3577 / RP62A), this protein is Probable malate:quinone oxidoreductase 4.